The chain runs to 99 residues: Aspartyl/glutamyl-tRNA(Asn/Gln) amidotransferase subunit C (99 aa).

Belongs to the GatC family. Heterotrimer of A, B and C subunits.

It catalyses the reaction L-glutamyl-tRNA(Gln) + L-glutamine + ATP + H2O = L-glutaminyl-tRNA(Gln) + L-glutamate + ADP + phosphate + H(+). The enzyme catalyses L-aspartyl-tRNA(Asn) + L-glutamine + ATP + H2O = L-asparaginyl-tRNA(Asn) + L-glutamate + ADP + phosphate + 2 H(+). Its function is as follows. Allows the formation of correctly charged Asn-tRNA(Asn) or Gln-tRNA(Gln) through the transamidation of misacylated Asp-tRNA(Asn) or Glu-tRNA(Gln) in organisms which lack either or both of asparaginyl-tRNA or glutaminyl-tRNA synthetases. The reaction takes place in the presence of glutamine and ATP through an activated phospho-Asp-tRNA(Asn) or phospho-Glu-tRNA(Gln). The polypeptide is Aspartyl/glutamyl-tRNA(Asn/Gln) amidotransferase subunit C (Cupriavidus metallidurans (strain ATCC 43123 / DSM 2839 / NBRC 102507 / CH34) (Ralstonia metallidurans)).